The following is a 231-amino-acid chain: Ion-translocating oxidoreductase complex subunit E (231 aa).

Helical transmembrane passes span 18–38 (ALVQ…ATNA), 39–59 (LGLG…ISTL), 63–83 (TPAE…VSAV), 86–106 (LINA…PLIV), 125–145 (ALSA…MFVL), and 182–202 (PFLL…MLAG).

Belongs to the NqrDE/RnfAE family. As to quaternary structure, the complex is composed of six subunits: RsxA, RsxB, RsxC, RsxD, RsxE and RsxG.

Its subcellular location is the cell inner membrane. Part of a membrane-bound complex that couples electron transfer with translocation of ions across the membrane. Required to maintain the reduced state of SoxR. This is Ion-translocating oxidoreductase complex subunit E from Shigella boydii serotype 18 (strain CDC 3083-94 / BS512).